The sequence spans 490 residues: Chromosomal replication initiator protein DnaA (490 aa).

The segment at 1–75 (MAVSSDAEQK…SELWKQEDAD (75 aa)) is domain I, interacts with DnaA modulators. A domain II region spans residues 75–145 (DLLKIEIVVR…SEFRHNVLGS (71 aa)). Residues 146-368 (PLDPRYTFGS…GAFNQLLFRQ (223 aa)) form a domain III, AAA+ region region. ATP contacts are provided by Gly192, Gly194, Lys195, and Thr196. The tract at residues 369 to 490 (SFEPQITIDR…LLRRLINDQA (122 aa)) is domain IV, binds dsDNA.

The protein belongs to the DnaA family. Oligomerizes as a right-handed, spiral filament on DNA at oriC.

Its subcellular location is the cytoplasm. Its function is as follows. Plays an essential role in the initiation and regulation of chromosomal replication. ATP-DnaA binds to the origin of replication (oriC) to initiate formation of the DNA replication initiation complex once per cell cycle. Binds the DnaA box (a 9 base pair repeat at the origin) and separates the double-stranded (ds)DNA. Forms a right-handed helical filament on oriC DNA; dsDNA binds to the exterior of the filament while single-stranded (ss)DNA is stabiized in the filament's interior. The ATP-DnaA-oriC complex binds and stabilizes one strand of the AT-rich DNA unwinding element (DUE), permitting loading of DNA polymerase. After initiation quickly degrades to an ADP-DnaA complex that is not apt for DNA replication. Binds acidic phospholipids. The protein is Chromosomal replication initiator protein DnaA of Mesorhizobium japonicum (strain LMG 29417 / CECT 9101 / MAFF 303099) (Mesorhizobium loti (strain MAFF 303099)).